We begin with the raw amino-acid sequence, 310 residues long: Protein RL1 (310 aa).

The span at 1–12 shows a compositional bias: polar residues; sequence MPATDTNSTHTT. Positions 1 to 44 are disordered; that stretch reads MPATDTNSTHTTPLHPEDQHTLPLHHSTTQPHVQTSDKHADKQH. Residues 35 to 44 show a composition bias toward basic and acidic residues; that stretch reads TSDKHADKQH. The segment at 153–159 is involved in the interaction with host DDB1; it reads LLLARQR. Residues 205–252 are disordered; the sequence is ERPSAGEAQARGLLPRIRITPISTSPRPKPPQPTTSTASHPHATARPD. Residues 238-248 are compositionally biased toward low complexity; the sequence is TTSTASHPHAT.

Belongs to the HHV-5 HKLF1 family. Interacts with host adaptor protein DDB1; this interaction allows RL1 to recruit the cullin4-RING E3 ubiquitin ligase (CRL4) complex and promote SLN11 degradation.

Functionally, degrades the host antiviral factor SLFN11 via the cullin4-RING E3 ubiquitin ligase (CRL4) complex. The chain is Protein RL1 (RL1) from Human cytomegalovirus (strain Merlin) (HHV-5).